The chain runs to 191 residues: dCTP deaminase, dUMP-forming (191 aa).

DCTP contacts are provided by residues 101 to 106, Asp119, 127 to 129, Gln148, Tyr162, and Gln174; these read KSSLGR and TLE. Glu129 (proton donor/acceptor) is an active-site residue. The interval 163–191 is disordered; sequence GSPVYGSRYQGQRGPTPSRSWQNFHRTKI. Over residues 171–191 the composition is skewed to polar residues; that stretch reads YQGQRGPTPSRSWQNFHRTKI.

The protein belongs to the dCTP deaminase family. Homotrimer.

It catalyses the reaction dCTP + 2 H2O = dUMP + NH4(+) + diphosphate. Its pathway is pyrimidine metabolism; dUMP biosynthesis; dUMP from dCTP: step 1/1. Bifunctional enzyme that catalyzes both the deamination of dCTP to dUTP and the hydrolysis of dUTP to dUMP without releasing the toxic dUTP intermediate. This is dCTP deaminase, dUMP-forming from Acidothermus cellulolyticus (strain ATCC 43068 / DSM 8971 / 11B).